Reading from the N-terminus, the 476-residue chain is Cytosolic Fe-S cluster assembly factor narfl (476 aa).

The [4Fe-4S] cluster site is built by cysteine 24, cysteine 71, cysteine 74, cysteine 77, cysteine 190, cysteine 246, cysteine 395, and cysteine 399.

The protein belongs to the NARF family. In terms of assembly, component of the CIA complex.

Its function is as follows. Component of the cytosolic iron-sulfur protein assembly (CIA) complex, a multiprotein complex that mediates the incorporation of iron-sulfur cluster into extramitochondrial Fe/S proteins. This is Cytosolic Fe-S cluster assembly factor narfl (narfl) from Xenopus tropicalis (Western clawed frog).